A 60-amino-acid chain; its full sequence is Large ribosomal subunit protein uL30 (60 aa).

Belongs to the universal ribosomal protein uL30 family. In terms of assembly, part of the 50S ribosomal subunit.

The polypeptide is Large ribosomal subunit protein uL30 (Burkholderia ambifaria (strain MC40-6)).